The chain runs to 297 residues: MGRFPLAAKPLQVAILGTGNIGTDLLLKIQRSQLLKCVAFVGRSSQSSGMVKARSLGVPCSDLSIEYFRQNGEKIDLVFDATSAKDHLVHAPILRELGIRVIDLTPAKVGKMCIPAVHRSSLLNEWNLNMVTCGGQASSPLAWAIGQTQGSIEYLEVVSSIASKSAGPATRLNLDEYIHTTEKALAELSGAKNTKAILVLNPAEPCIDMQTTVFAKVDSPDLLKLQKLLSEVIPRTQAYVPGYQVALGPIVDNGRISIMVRVRGVGDYLPEYAGNLDIINCAAIAMAEEYAKAAHEQ.

NAD(+) is bound at residue 18–21; the sequence is TGNI. Residue cysteine 133 is the Acyl-thioester intermediate of the active site. NAD(+) contacts are provided by residues 165–173 and asparagine 275; that span reads SAGPATRLN.

Belongs to the acetaldehyde dehydrogenase family.

The enzyme catalyses acetaldehyde + NAD(+) + CoA = acetyl-CoA + NADH + H(+). The sequence is that of Acetaldehyde dehydrogenase from Spirochaeta aurantia.